A 420-amino-acid chain; its full sequence is O-methyltransferase penK (420 aa).

Asp-285 serves as a coordination point for S-adenosyl-L-methionine. Catalysis depends on His-325, which acts as the Proton acceptor.

The protein belongs to the class I-like SAM-binding methyltransferase superfamily. Cation-independent O-methyltransferase family.

Its pathway is secondary metabolite biosynthesis. It functions in the pathway alkaloid biosynthesis. It participates in mycotoxin biosynthesis. Its function is as follows. O-methyltransferase; part of the gene cluster that mediates the biosynthesis of penigequinolones, potent insecticidal alkaloids that contain a highly modified 10-carbon prenyl group. The first stage is catalyzed by the nonribosomal peptide synthetase penN that condenses anthranilic acid and O-methyl-L-tyrosine to produce 4'-methoxycyclopeptin. 4'-methoxycyclopeptin is then converted to 4'-methoxydehydrocyclopeptin by the ketoglutarate-dependent dioxygenase penM through dehydrogenation to form a double bond between C-alpha and C-beta of the O-methyltyrosine side chain. PenM also converts its first product methoxydehydrocyclopeptin to 4'-methoxycyclopenin. The following conversion of 4'methoxycyclopenin into 4'-methoxyviridicatin is catalyzed by the cyclopenase penL. 4'-methoxyviridicatin is the precursor of quinolone natural products, and is further converted to quinolinone B. The prenyltransferase penI then catalyzes the canonical Friedel-Crafts alkylation of quinolinone B with dimethylallyl cation to yield dimethylallyl quinolone, which is subjected to FAD-dependent dehydrogenation by the FAD-linked oxidoreductase penH to yield conjugated aryl diene. The delta(3') double bond then serves as the site of the second alkylation with DMAPP catalyzed by the prenyltransferase penG to yield a carbenium ion intermediate, which can be attacked by H(2)O to yield a styrenyl quinolone containing a C3'-hydroxyprenyl chain, or undergo cyclization to yield yaequinolones J1 and J2. The conversion of the styrenyl quinolone into the tetrahydrofuran-containing yaequinolone C is performed by the FAD-dependent monooxygenase penE and involves epoxidation of the terminal C7'-C8' olefin, followed by epoxide ring opening initiated by the C3' hydroxyl group. The predicted cysteine hydrolase penJ acts as an epoxide hydrolase that enhances the rate of the 5-exo-tet cyclization step, increasing the yield of yaequinolone C. PenF catalyzes the cationic rearrangement of the epoxide formed by penE (before ring opening to produce yaequinolone C) into yaequinolone D. Finally, the short-chain dehydrogenase/reductase (SDR)-like reductase penD, catalyzes both the dehydration of yaequinolone D and the reduction of the resulting oxonium to yield penigequinolone. The chain is O-methyltransferase penK from Penicillium thymicola.